Consider the following 124-residue polypeptide: Secretion system apparatus protein SsaP (124 aa).

The polypeptide is Secretion system apparatus protein SsaP (ssaP) (Salmonella typhi).